The primary structure comprises 362 residues: Histidinol-phosphate aminotransferase (362 aa).

N6-(pyridoxal phosphate)lysine is present on Lys-218.

The protein belongs to the class-II pyridoxal-phosphate-dependent aminotransferase family. Histidinol-phosphate aminotransferase subfamily. Homodimer. Requires pyridoxal 5'-phosphate as cofactor.

The catalysed reaction is L-histidinol phosphate + 2-oxoglutarate = 3-(imidazol-4-yl)-2-oxopropyl phosphate + L-glutamate. Its pathway is amino-acid biosynthesis; L-histidine biosynthesis; L-histidine from 5-phospho-alpha-D-ribose 1-diphosphate: step 7/9. The chain is Histidinol-phosphate aminotransferase from Xanthomonas campestris pv. campestris (strain ATCC 33913 / DSM 3586 / NCPPB 528 / LMG 568 / P 25).